Consider the following 170-residue polypeptide: Adenine phosphoribosyltransferase (170 aa).

It belongs to the purine/pyrimidine phosphoribosyltransferase family. In terms of assembly, homodimer.

The protein resides in the cytoplasm. It carries out the reaction AMP + diphosphate = 5-phospho-alpha-D-ribose 1-diphosphate + adenine. It participates in purine metabolism; AMP biosynthesis via salvage pathway; AMP from adenine: step 1/1. Catalyzes a salvage reaction resulting in the formation of AMP, that is energically less costly than de novo synthesis. In Bacillus velezensis (strain DSM 23117 / BGSC 10A6 / LMG 26770 / FZB42) (Bacillus amyloliquefaciens subsp. plantarum), this protein is Adenine phosphoribosyltransferase.